We begin with the raw amino-acid sequence, 541 residues long: Chaperonin GroEL (541 aa).

Residues 29-32 (TLGP), 86-90 (DGTTT), Gly413, 477-479 (DAL), and Asp493 contribute to the ATP site.

This sequence belongs to the chaperonin (HSP60) family. Forms a cylinder of 14 subunits composed of two heptameric rings stacked back-to-back. Interacts with the co-chaperonin GroES.

Its subcellular location is the cytoplasm. The catalysed reaction is ATP + H2O + a folded polypeptide = ADP + phosphate + an unfolded polypeptide.. Its function is as follows. Together with its co-chaperonin GroES, plays an essential role in assisting protein folding. The GroEL-GroES system forms a nano-cage that allows encapsulation of the non-native substrate proteins and provides a physical environment optimized to promote and accelerate protein folding. The protein is Chaperonin GroEL of Clostridium beijerinckii (strain ATCC 51743 / NCIMB 8052) (Clostridium acetobutylicum).